The following is a 482-amino-acid chain: Reduced viability upon starvation protein 167 (482 aa).

N-acetylserine is present on serine 2. One can recognise a BAR domain in the interval 17 to 254 (FRQKFKMGEQ…YFDLNSDIVE (238 aa)). Coiled coils occupy residues 31–64 (VYED…NGML) and 174–204 (AKDE…LKTQ). Lysine 242 participates in a covalent cross-link: Glycyl lysine isopeptide (Lys-Gly) (interchain with G-Cter in ubiquitin). Phosphoserine; by FUS3 and PHO85 occurs at positions 299, 321, and 379. The interval 382–407 (LTGLGFQQSPQQQQGPPPAYSNPLTS) is disordered. The 62-residue stretch at 421 to 482 (PGVETVTALY…PGNYVQLNKN (62 aa)) folds into the SH3 domain. Lysine 481 is covalently cross-linked (Glycyl lysine isopeptide (Lys-Gly) (interchain with G-Cter in ubiquitin)).

As to quaternary structure, binds to actin. Interacts with ABP1, GYL1, GYP5, PCL2 and YBR108W. In terms of processing, phosphorylated redundantly by cyclin-dependent kinase PHO85 in association with PCL1,2-type cyclins or by MAP kinase FUS3. Phosphorylation inhibits interaction with complexes involved in actin cytoskeleton function.

The protein localises to the cytoplasm. Its subcellular location is the cytoskeleton. Functionally, component of a cytoskeletal structure that is required for the formation of endocytic vesicles at the plasma membrane level. Could be implicated in cytoskeletal reorganization in response to environmental stresses and could act in the budding site selection mechanism. The polypeptide is Reduced viability upon starvation protein 167 (RVS167) (Saccharomyces cerevisiae (strain ATCC 204508 / S288c) (Baker's yeast)).